Consider the following 275-residue polypeptide: MCGSFLRRVAAEESRHPTPVGRLLLPALLGLRLVLLAAGGTGVFGGGEEQSEFVCHTQQAGCKAVCYDAFHPLSPLRFWAFQVTLVAVPSALYMGFILYHVIWHWEASEKVKTEEETLSQGEKGGEASRAGSSRLLWAYVAQLGVRLALEGAALGGQYHLYGFRMPSSFVCRLEPCLGSTNCYLSRPSEKSIFLKTMFGVTGLCLLFTLLELVLLGLGRWWRIWRHKSPSSNYSPTSQSAKRCKAPTDNFPVVEIRERPGEAGERGSEVPLSARP.

Over methionine 1–arginine 22 the chain is Cytoplasmic. Residues leucine 23–valine 43 form a helical membrane-spanning segment. Residues phenylalanine 44–arginine 77 are Extracellular-facing. Residues phenylalanine 78 to leucine 98 traverse the membrane as a helical segment. Over tyrosine 99 to arginine 134 the chain is Cytoplasmic. A helical transmembrane segment spans residues leucine 135–glycine 155. Topologically, residues glycine 156–threonine 196 are extracellular. The chain crosses the membrane as a helical span at residues methionine 197 to leucine 217. At glycine 218–proline 275 the chain is on the cytoplasmic side. The span at glutamate 254–serine 267 shows a compositional bias: basic and acidic residues. Residues glutamate 254 to proline 275 are disordered.

This sequence belongs to the connexin family. Gamma-type subfamily. In terms of assembly, a connexon is composed of a hexamer of connexins.

It localises to the cell membrane. The protein localises to the cell junction. The protein resides in the gap junction. Its function is as follows. One gap junction consists of a cluster of closely packed pairs of transmembrane channels, the connexons, through which materials of low MW diffuse from one cell to a neighboring cell. In Bos taurus (Bovine), this protein is Gap junction gamma-3 protein (GJC3).